A 186-amino-acid polypeptide reads, in one-letter code: Ribosome-recycling factor (186 aa).

The protein belongs to the RRF family.

The protein resides in the cytoplasm. Functionally, responsible for the release of ribosomes from messenger RNA at the termination of protein biosynthesis. May increase the efficiency of translation by recycling ribosomes from one round of translation to another. In Limosilactobacillus reuteri (Lactobacillus reuteri), this protein is Ribosome-recycling factor.